Reading from the N-terminus, the 337-residue chain is Anthraniloyl-CoA anthraniloyltransferase (337 aa).

Residues T29 and F33 each contribute to the anthraniloyl-CoA site. C113 acts as the Acyl-thioester intermediate in catalysis. Anthraniloyl-CoA is bound by residues 154-155, 221-224, and H258; these read RN and MRGR.

Belongs to the thiolase-like superfamily. FabH family. In terms of assembly, homodimer.

The protein localises to the cytoplasm. The catalysed reaction is anthraniloyl-CoA + malonyl-CoA + H(+) = (2-aminobenzoyl)acetyl-CoA + CO2 + CoA. Required for the biosynthesis of a number of signaling molecules, such as the quinolone signal 2-heptyl-3-hydroxy-4(1H)-quinolone (PQS), 2-heptyl-4-hydroxyquinoline (HHQ) and 2,4-dihydroxyquinoline (DHQ). These molecules are required for normal biofilm formation. Catalyzes the transfer of the anthraniloyl moiety from anthraniloyl-CoA to malonyl-CoA to form 2-aminobenzoylacetyl-CoA. The first step of the reaction is the formation of a covalent anthraniloyl-PqsD intermediate. Next, the short-lived intermediate 3-(2-aminophenyl)-3-oxopropanoyl-CoA is formed. An intramolecular rearrangement of this intermediate can give rise to 2,4-dihydroxyquinoline (DHQ). This chain is Anthraniloyl-CoA anthraniloyltransferase (pqsD), found in Pseudomonas aeruginosa (strain ATCC 15692 / DSM 22644 / CIP 104116 / JCM 14847 / LMG 12228 / 1C / PRS 101 / PAO1).